The following is an 841-amino-acid chain: DNA ligase (841 aa).

NAD(+)-binding positions include 33–37, 82–83, and Glu-114; these read DAQYD and SL. The active-site N6-AMP-lysine intermediate is Lys-116. Arg-137, Glu-174, Lys-300, and Lys-324 together coordinate NAD(+). Positions 418, 421, 436, and 442 each coordinate Zn(2+). The region spanning 758-841 is the BRCT domain; it reads EKTGPLDGQT…AFLGEHGQQR (84 aa).

The protein belongs to the NAD-dependent DNA ligase family. LigA subfamily. The cofactor is Mg(2+). Mn(2+) is required as a cofactor.

It catalyses the reaction NAD(+) + (deoxyribonucleotide)n-3'-hydroxyl + 5'-phospho-(deoxyribonucleotide)m = (deoxyribonucleotide)n+m + AMP + beta-nicotinamide D-nucleotide.. DNA ligase that catalyzes the formation of phosphodiester linkages between 5'-phosphoryl and 3'-hydroxyl groups in double-stranded DNA using NAD as a coenzyme and as the energy source for the reaction. It is essential for DNA replication and repair of damaged DNA. The polypeptide is DNA ligase (Xanthomonas oryzae pv. oryzae (strain MAFF 311018)).